The following is a 118-amino-acid chain: Small ribosomal subunit protein uS13 (118 aa).

The tract at residues 91 to 118 (HRRGLPVRGQRTKTNARTRKGPRKPIKK) is disordered.

The protein belongs to the universal ribosomal protein uS13 family. As to quaternary structure, part of the 30S ribosomal subunit. Forms a loose heterodimer with protein S19. Forms two bridges to the 50S subunit in the 70S ribosome.

Its function is as follows. Located at the top of the head of the 30S subunit, it contacts several helices of the 16S rRNA. In the 70S ribosome it contacts the 23S rRNA (bridge B1a) and protein L5 of the 50S subunit (bridge B1b), connecting the 2 subunits; these bridges are implicated in subunit movement. Contacts the tRNAs in the A and P-sites. This Photorhabdus laumondii subsp. laumondii (strain DSM 15139 / CIP 105565 / TT01) (Photorhabdus luminescens subsp. laumondii) protein is Small ribosomal subunit protein uS13.